A 264-amino-acid polypeptide reads, in one-letter code: 3-methyl-2-oxobutanoate hydroxymethyltransferase (264 aa).

Mg(2+) contacts are provided by aspartate 45 and aspartate 84. Residues 45-46, aspartate 84, and lysine 112 each bind 3-methyl-2-oxobutanoate; that span reads DS. Glutamate 114 provides a ligand contact to Mg(2+). Catalysis depends on glutamate 181, which acts as the Proton acceptor.

It belongs to the PanB family. In terms of assembly, homodecamer; pentamer of dimers. Mg(2+) is required as a cofactor.

Its subcellular location is the cytoplasm. The catalysed reaction is 3-methyl-2-oxobutanoate + (6R)-5,10-methylene-5,6,7,8-tetrahydrofolate + H2O = 2-dehydropantoate + (6S)-5,6,7,8-tetrahydrofolate. Its pathway is cofactor biosynthesis; (R)-pantothenate biosynthesis; (R)-pantoate from 3-methyl-2-oxobutanoate: step 1/2. In terms of biological role, catalyzes the reversible reaction in which hydroxymethyl group from 5,10-methylenetetrahydrofolate is transferred onto alpha-ketoisovalerate to form ketopantoate. In Shigella sonnei (strain Ss046), this protein is 3-methyl-2-oxobutanoate hydroxymethyltransferase.